The following is a 501-amino-acid chain: Dipeptide and tripeptide permease A (501 aa).

Over 1–21 the chain is Cytoplasmic; the sequence is MSTANKKPTESVSLNAFKQPK. A helical transmembrane segment spans residues 22–44; the sequence is AFYLIFSIELWERFGYYGLQGIM. The Periplasmic segment spans residues 45–59; sequence AVYLVKQLGMSEADS. Residues 60 to 80 form a helical membrane-spanning segment; that stretch reads ITLFSSFSALVYGLVAIGGWL. At 81–89 the chain is on the cytoplasmic side; that stretch reads GDKILGTKR. A helical membrane pass occupies residues 90–110; it reads VIMLGAVVLAIGYALVAWSGH. Position 111 (aspartate 111) is a topological domain, periplasmic. Residues 112 to 132 form a helical membrane-spanning segment; that stretch reads AGIVYMGMAAIAVGNGLFKAN. Residues 133–153 are Cytoplasmic-facing; it reads PSSLLSTCYAKDDPRLDGAFT. The helical transmembrane segment at 154–174 threads the bilayer; sequence MYYMSVNIGSFFSMLATPWLA. Topologically, residues 175–178 are periplasmic; it reads ARYG. The helical transmembrane segment at 179–199 threads the bilayer; the sequence is WSTAFALSVVGMLITVVNFAF. The Cytoplasmic segment spans residues 200 to 219; that stretch reads CQRWVKSYGSKPDFEPINFR. The chain crosses the membrane as a helical span at residues 220–240; the sequence is NLLLTIVGIVVLIAVATWLLH. The Periplasmic segment spans residues 241 to 246; the sequence is NQDIAR. A helical transmembrane segment spans residues 247–267; the sequence is MVLGVIALGIVIIFGKEAFSM. The Cytoplasmic portion of the chain corresponds to 268-274; that stretch reads HGAARRK. A helical membrane pass occupies residues 275–295; that stretch reads MIVAFILMLQAIIFFVLYSQM. Residues 296-320 lie on the Periplasmic side of the membrane; that stretch reads PTSLNFFAIRNVEHSILGIAFEPEQ. The helical transmembrane segment at 321 to 341 threads the bilayer; that stretch reads YQALNPFWIITGSPILAAIYN. The Cytoplasmic portion of the chain corresponds to 342–352; sequence RMGDTLPMPMK. The chain crosses the membrane as a helical span at residues 353-373; the sequence is FAIGMVLCSGAFLILPLGAKF. Topologically, residues 374 to 383 are periplasmic; it reads ANDAGIVSVN. The chain crosses the membrane as a helical span at residues 384–404; that stretch reads WLIASYGLQSIGELMISGLGL. Residues 405–414 lie on the Cytoplasmic side of the membrane; it reads AMVAQLVPQR. A helical transmembrane segment spans residues 415–435; it reads LMGFIMGSWFLTTAGANIIGG. The Periplasmic portion of the chain corresponds to 436 to 459; it reads YVANLMAVPSDVTDPLMSLEVYGR. The helical transmembrane segment at 460-480 threads the bilayer; the sequence is VFMQIGIATAVIAVLMLLTAP. Residues 481–501 are Cytoplasmic-facing; the sequence is KLNRMTQDDDTAEKGSKAATV.

Belongs to the major facilitator superfamily. Proton-dependent oligopeptide transporter (POT/PTR) (TC 2.A.17) family. DtpA subfamily.

The protein localises to the cell inner membrane. Functionally, proton-dependent permease that transports di- and tripeptides. The sequence is that of Dipeptide and tripeptide permease A from Salmonella typhi.